Consider the following 195-residue polypeptide: Myelin-associated neurite-outgrowth inhibitor (195 aa).

Position 1 is an N-acetylmethionine (Met-1). Residues 1–18 (MNPVYSPGSSGVPYANAK) lie on the Cytoplasmic side of the membrane. Ser-6 carries the phosphoserine modification. A helical membrane pass occupies residues 19–42 (GIGYPAGFPMGYAAAAPAYSPNMY). The Extracellular portion of the chain corresponds to 43 to 142 (PGANPTFQAG…PAPLPPPRGN (100 aa)). Asn-46 is a glycosylation site (N-linked (GlcNAc...) asparagine). Residues 143-164 (GVTMGMVAGTTMAMSAGTLLTA) traverse the membrane as a helical segment. Residues 165–195 (HSPTPVAPHPVTVPTYRAPGTPTYSYVPPQW) are Cytoplasmic-facing.

This sequence belongs to the FAM168 family. In terms of assembly, may form homodimers. May interact with DAZAP2, FAM168A, PRDX6, RBM6, TMTC1 and YPEL2. Interacts with CDC27. In terms of processing, N-glycosylated.

Its subcellular location is the cytoplasm. It is found in the perinuclear region. It localises to the cell membrane. The protein resides in the cell projection. The protein localises to the axon. In terms of biological role, inhibitor of neuronal axonal outgrowth. Acts as a negative regulator of CDC42 and STAT3 and a positive regulator of STMN2. Positive regulator of CDC27. In Bos taurus (Bovine), this protein is Myelin-associated neurite-outgrowth inhibitor (FAM168B).